Reading from the N-terminus, the 552-residue chain is uncharacterized protein (552 aa).

The region spanning 8–200 (KLFADMIIQG…LLCVYEGFLK (193 aa)) is the DhaL domain.

This is an uncharacterized protein from Staphylococcus epidermidis (strain ATCC 35984 / DSM 28319 / BCRC 17069 / CCUG 31568 / BM 3577 / RP62A).